Reading from the N-terminus, the 90-residue chain is Large ribosomal subunit protein bL27 (90 aa).

The segment at 1–20 (MAHKKAGGSSRNGRDSAGKR) is disordered.

This sequence belongs to the bacterial ribosomal protein bL27 family.

The sequence is that of Large ribosomal subunit protein bL27 from Rhodopseudomonas palustris (strain ATCC BAA-98 / CGA009).